We begin with the raw amino-acid sequence, 272 residues long: Shikimate dehydrogenase (NADP(+)) (272 aa).

Shikimate is bound by residues 14 to 16 (SKS) and threonine 61. Lysine 65 functions as the Proton acceptor in the catalytic mechanism. The shikimate site is built by asparagine 86 and aspartate 102. Residues 126–130 (GAGGA), 150–155 (NRTASK), and methionine 214 each bind NADP(+). Tyrosine 216 is a binding site for shikimate. Glycine 239 is an NADP(+) binding site.

Belongs to the shikimate dehydrogenase family. In terms of assembly, homodimer.

The enzyme catalyses shikimate + NADP(+) = 3-dehydroshikimate + NADPH + H(+). The protein operates within metabolic intermediate biosynthesis; chorismate biosynthesis; chorismate from D-erythrose 4-phosphate and phosphoenolpyruvate: step 4/7. In terms of biological role, involved in the biosynthesis of the chorismate, which leads to the biosynthesis of aromatic amino acids. Catalyzes the reversible NADPH linked reduction of 3-dehydroshikimate (DHSA) to yield shikimate (SA). The sequence is that of Shikimate dehydrogenase (NADP(+)) from Pseudoalteromonas atlantica (strain T6c / ATCC BAA-1087).